The primary structure comprises 105 residues: Heat shock protein HspQ (105 aa).

It belongs to the HspQ family.

It is found in the cytoplasm. Its function is as follows. Involved in the degradation of certain denaturated proteins, including DnaA, during heat shock stress. In Sodalis glossinidius (strain morsitans), this protein is Heat shock protein HspQ.